The primary structure comprises 139 residues: Large ribosomal subunit protein uL16c (139 aa).

A disordered region spans residues 1–20 (MLSPKRTKYRKHHRGRMKGK).

The protein belongs to the universal ribosomal protein uL16 family. In terms of assembly, part of the 50S ribosomal subunit.

It is found in the plastid. The protein resides in the chloroplast. This is Large ribosomal subunit protein uL16c from Pleurastrum terricola (Filamentous green alga).